Reading from the N-terminus, the 47-residue chain is Potassium channel toxin alpha-KTx 7.1 (47 aa).

The signal sequence occupies residues 1 to 12 (RGSVDYKDDDDK). Intrachain disulfides connect Cys-16-Cys-37, Cys-22-Cys-42, and Cys-26-Cys-44.

Belongs to the short scorpion toxin superfamily. Potassium channel inhibitor family. Alpha-KTx 07 subfamily. As to expression, expressed by the venom gland.

It is found in the secreted. Its function is as follows. Potent inhibitor of the A-type voltage-gated potassium channels. Most potent inhibitor of Kv1.2/KCNA2 channels. Reversibly block the Shaker B potassium-channels (Kv1.1 sub-family). The polypeptide is Potassium channel toxin alpha-KTx 7.1 (PTX-1) (Pandinus imperator (Emperor scorpion)).